A 383-amino-acid polypeptide reads, in one-letter code: Bifunctional enzyme IspD/IspF (383 aa).

The interval 1–226 is 2-C-methyl-D-erythritol 4-phosphate cytidylyltransferase; it reads MKIAAVIVAA…ERQIMSETIT (226 aa). The interval 227–383 is 2-C-methyl-D-erythritol 2,4-cyclodiphosphate synthase; it reads VTGQGYDVHR…QAIVTARLTT (157 aa). A divalent metal cation-binding residues include Asp233 and His235. 4-CDP-2-C-methyl-D-erythritol 2-phosphate-binding positions include 233–235 and 259–260; these read DVH and HS. His267 lines the a divalent metal cation pocket. 4-CDP-2-C-methyl-D-erythritol 2-phosphate contacts are provided by residues 281 to 283, 357 to 360, Phe364, and Arg367; these read DIG and TTTE.

It in the N-terminal section; belongs to the IspD/TarI cytidylyltransferase family. IspD subfamily. In the C-terminal section; belongs to the IspF family. A divalent metal cation serves as cofactor.

It catalyses the reaction 2-C-methyl-D-erythritol 4-phosphate + CTP + H(+) = 4-CDP-2-C-methyl-D-erythritol + diphosphate. The enzyme catalyses 4-CDP-2-C-methyl-D-erythritol 2-phosphate = 2-C-methyl-D-erythritol 2,4-cyclic diphosphate + CMP. It functions in the pathway isoprenoid biosynthesis; isopentenyl diphosphate biosynthesis via DXP pathway; isopentenyl diphosphate from 1-deoxy-D-xylulose 5-phosphate: step 2/6. It participates in isoprenoid biosynthesis; isopentenyl diphosphate biosynthesis via DXP pathway; isopentenyl diphosphate from 1-deoxy-D-xylulose 5-phosphate: step 4/6. In terms of biological role, bifunctional enzyme that catalyzes the formation of 4-diphosphocytidyl-2-C-methyl-D-erythritol from CTP and 2-C-methyl-D-erythritol 4-phosphate (MEP) (IspD), and catalyzes the conversion of 4-diphosphocytidyl-2-C-methyl-D-erythritol 2-phosphate (CDP-ME2P) to 2-C-methyl-D-erythritol 2,4-cyclodiphosphate (ME-CPP) with a corresponding release of cytidine 5-monophosphate (CMP) (IspF). This Maricaulis maris (strain MCS10) (Caulobacter maris) protein is Bifunctional enzyme IspD/IspF.